Here is a 421-residue protein sequence, read N- to C-terminus: Testin (421 aa).

One can recognise a PET domain in the interval 92–199 (MILTNPVAAK…GDVKLPCEMD (108 aa)). The tract at residues 133 to 164 (EKQPVAGSEGAQYRKKQLAKQLPAHDQDPSKC) is disordered. Over residues 155-164 (PAHDQDPSKC) the composition is skewed to basic and acidic residues. LIM zinc-binding domains are found at residues 234–297 (YSCY…CDSE), 299–359 (PRCA…NHAV), and 362–421 (QGCH…KRMS).

The protein belongs to the prickle / espinas / testin family. In terms of assembly, interacts via LIM domain 1 with ZYX. Interacts (via LIM domain 3) with ENAH and VASP. Interacts with ALKBH4, talin, actin, alpha-actinin, GRIP1 and PXN. Interacts (via LIM domain 2) with ACTL7A (via N-terminus). Heterodimer with ACTL7A; the heterodimer interacts with ENAH to form a heterotrimer.

It localises to the cytoplasm. The protein resides in the cell junction. The protein localises to the focal adhesion. Functionally, scaffold protein that may play a role in cell adhesion, cell spreading and in the reorganization of the actin cytoskeleton. Plays a role in the regulation of cell proliferation. May act as a tumor suppressor. The protein is Testin (TES) of Pan troglodytes (Chimpanzee).